The following is a 364-amino-acid chain: GTPase Obg (364 aa).

The Obg domain occupies 1–159; the sequence is MKFLDEAKVY…KTIWLHLKLI (159 aa). The OBG-type G domain maps to 160–327; sequence ADAGLVGLPN…VLRALRDIIV (168 aa). GTP contacts are provided by residues 166 to 173, 191 to 195, 212 to 215, 279 to 282, and 308 to 310; these read GLPNAGKS, FTTLH, DIPG, SQID, and SAV. Residues S173 and T193 each contribute to the Mg(2+) site. The interval 333–364 is disordered; that stretch reads EKPAKVPKLRHRDMVVTDEGEDKGGDEGDDQP.

This sequence belongs to the TRAFAC class OBG-HflX-like GTPase superfamily. OBG GTPase family. Monomer. The cofactor is Mg(2+).

It localises to the cytoplasm. An essential GTPase which binds GTP, GDP and possibly (p)ppGpp with moderate affinity, with high nucleotide exchange rates and a fairly low GTP hydrolysis rate. Plays a role in control of the cell cycle, stress response, ribosome biogenesis and in those bacteria that undergo differentiation, in morphogenesis control. This Rhizobium johnstonii (strain DSM 114642 / LMG 32736 / 3841) (Rhizobium leguminosarum bv. viciae) protein is GTPase Obg.